A 694-amino-acid chain; its full sequence is Putative L-type lectin-domain containing receptor kinase II.2 (694 aa).

Positions 1–24 (MAGVLRSLRFWMIICVQVLSLVLA) are cleaved as a signal peptide. The Extracellular segment spans residues 25 to 318 (QDRDEFVYHD…PTSRSKDSKN (294 aa)). A legume-lectin like region spans residues 27–272 (RDEFVYHDFS…DQYILGWSFK (246 aa)). 10 N-linked (GlcNAc...) asparagine glycosylation sites follow: asparagine 57, asparagine 58, asparagine 73, asparagine 131, asparagine 172, asparagine 183, asparagine 201, asparagine 208, asparagine 240, and asparagine 246. Residues 283–314 (SKILDPPNRPPPPSSPPPPPPPPPTPPTSRSK) form a disordered region. A compositionally biased stretch (pro residues) spans 289–309 (PNRPPPPSSPPPPPPPPPTPP). The chain crosses the membrane as a helical span at residues 319 to 339 (IIIICVTVTSIAFLLMLGGFL). Topologically, residues 340 to 694 (YLYKKKKYAE…EDVTILFGGR (355 aa)) are cytoplasmic. The Protein kinase domain occupies 375-650 (FRENRLLGAG…IQYLEGNATI (276 aa)). Residues 381–389 (LGAGGFGKV) and lysine 403 each bind ATP. Aspartate 500 serves as the catalytic Proton acceptor.

It in the C-terminal section; belongs to the protein kinase superfamily. Ser/Thr protein kinase family. This sequence in the N-terminal section; belongs to the leguminous lectin family.

The protein resides in the cell membrane. The catalysed reaction is L-seryl-[protein] + ATP = O-phospho-L-seryl-[protein] + ADP + H(+). It catalyses the reaction L-threonyl-[protein] + ATP = O-phospho-L-threonyl-[protein] + ADP + H(+). The polypeptide is Putative L-type lectin-domain containing receptor kinase II.2 (LECRK22) (Arabidopsis thaliana (Mouse-ear cress)).